The sequence spans 344 residues: Anthranilate phosphoribosyltransferase (344 aa).

5-phospho-alpha-D-ribose 1-diphosphate contacts are provided by residues G80, 83 to 84 (GD), T88, 90 to 93 (NVST), 108 to 116 (KHGNRSVSS), and S120. G80 is an anthranilate binding site. S92 contacts Mg(2+). N111 contacts anthranilate. R166 provides a ligand contact to anthranilate. Residues D225 and E226 each contribute to the Mg(2+) site.

It belongs to the anthranilate phosphoribosyltransferase family. Homodimer. The cofactor is Mg(2+).

The enzyme catalyses N-(5-phospho-beta-D-ribosyl)anthranilate + diphosphate = 5-phospho-alpha-D-ribose 1-diphosphate + anthranilate. It functions in the pathway amino-acid biosynthesis; L-tryptophan biosynthesis; L-tryptophan from chorismate: step 2/5. In terms of biological role, catalyzes the transfer of the phosphoribosyl group of 5-phosphorylribose-1-pyrophosphate (PRPP) to anthranilate to yield N-(5'-phosphoribosyl)-anthranilate (PRA). The protein is Anthranilate phosphoribosyltransferase of Legionella pneumophila (strain Lens).